Here is a 381-residue protein sequence, read N- to C-terminus: Sulfite reductase, dissimilatory-type subunit beta (381 aa).

[4Fe-4S] cluster-binding residues include C151, C188, C189, C193, C231, C258, C261, and C264. C193 is a binding site for siroheme. One can recognise a 4Fe-4S ferredoxin-type domain in the interval 249–276; it reads NTIAIKNERCMYCGNCYTMCPALPISDG.

Heterohexamer of two alpha, two beta and two gamma subunits. [4Fe-4S] cluster is required as a cofactor. Requires siroheme as cofactor.

It carries out the reaction [DsrC protein]-trisulfide + NAD(+) + 3 H2O = [DsrC protein]-dithiol + sulfite + NADH + 3 H(+). Functionally, catalyzes the reduction of sulfite to sulfide. This is the terminal oxidation reaction in sulfate respiration, a process catalyzed by the sulfate-reducing bacteria. This Nitratidesulfovibrio vulgaris (strain ATCC 29579 / DSM 644 / CCUG 34227 / NCIMB 8303 / VKM B-1760 / Hildenborough) (Desulfovibrio vulgaris) protein is Sulfite reductase, dissimilatory-type subunit beta (dsvB).